Consider the following 381-residue polypeptide: tRNA pseudouridine synthase D (381 aa).

The active-site Nucleophile is D81. Residues 160–335 enclose the TRUD domain; the sequence is GMPNYFGSQR…TLGSRRFFWV (176 aa).

The protein belongs to the pseudouridine synthase TruD family.

It catalyses the reaction uridine(13) in tRNA = pseudouridine(13) in tRNA. Its function is as follows. Responsible for synthesis of pseudouridine from uracil-13 in transfer RNAs. This is tRNA pseudouridine synthase D from Helicobacter pylori (strain ATCC 700392 / 26695) (Campylobacter pylori).